A 672-amino-acid polypeptide reads, in one-letter code: Transcription factor tau 91 kDa subunit (672 aa).

The tract at residues 1-158 (MAVIPAKKRG…SLGQKGRPIR (158 aa)) is required for DNA-binding. A DNA-binding region (a.T hook) is located at residues 6 to 18 (AKKRGRPRKSVVA). Disordered regions lie at residues 24–45 (SLASPVSENSGSKRPRRNASKK) and 67–156 (VNNV…KGRP). Over residues 71–100 (DDTDDDDFVLNDEGDGEESDNVEIEFENEL) the composition is skewed to acidic residues. The sufficient for interaction with TFC8 stretch occupies residues 159 to 672 (LLKDLSSARD…AGLLTLEYLS (514 aa)). Cysteine 375 and cysteine 383 form a disulfide bridge.

In terms of assembly, heterodimer with TFC8. Component of the TFIIIC complex composed of TFC1, TFC3, TFC4, TFC6, TFC7 and TFC8. The subunits are organized in two globular domains, tauA and tauB, connected by a proteolysis-sensitive and flexible linker. Interacts with TFC1, TFC3, TFC4 and directly with TFC8.

It localises to the nucleus. Functionally, TFIIIC mediates tRNA and 5S RNA gene activation by binding to intragenic promoter elements. Upstream of the transcription start site, TFIIIC assembles the initiation complex TFIIIB-TFIIIC-tDNA, which is sufficient for RNA polymerase III recruitment and function. Part of the tauB domain of TFIIIC that binds boxB DNA promoter sites of tRNA and similar genes. Cooperates with TFC3 in DNA binding. The chain is Transcription factor tau 91 kDa subunit (TFC6) from Saccharomyces cerevisiae (strain ATCC 204508 / S288c) (Baker's yeast).